The sequence spans 114 residues: Small ribosomal subunit protein bS6 (114 aa).

Belongs to the bacterial ribosomal protein bS6 family.

Its function is as follows. Binds together with bS18 to 16S ribosomal RNA. In Bacteroides thetaiotaomicron (strain ATCC 29148 / DSM 2079 / JCM 5827 / CCUG 10774 / NCTC 10582 / VPI-5482 / E50), this protein is Small ribosomal subunit protein bS6.